A 188-amino-acid chain; its full sequence is dCTP deaminase (188 aa).

Residues 111-116 (KSTYAR), 135-137 (TLE), glutamine 156, tyrosine 170, and glutamine 180 each bind dCTP. The active-site Proton donor/acceptor is the glutamate 137.

It belongs to the dCTP deaminase family. As to quaternary structure, homotrimer.

It carries out the reaction dCTP + H2O + H(+) = dUTP + NH4(+). Its pathway is pyrimidine metabolism; dUMP biosynthesis; dUMP from dCTP (dUTP route): step 1/2. Functionally, catalyzes the deamination of dCTP to dUTP. This Pseudomonas aeruginosa (strain UCBPP-PA14) protein is dCTP deaminase.